The chain runs to 126 residues: Scygonadin (126 aa).

The first 24 residues, 1–24 (MRSSLLLGLTVVVLLGVIVPPCMA), serve as a signal peptide directing secretion.

In terms of tissue distribution, expressed in the ejaculatory ducts of mature males. Not detected in the ejaculatory ducts of immature males. Not detected in hepatopancreas, female reproductive tract, eyes, exoskeleton, subcuticular epithelia, heart, gills, stomach, muscle and hemocytes.

Its subcellular location is the secreted. In terms of biological role, has antibacterial activity against the Gram-positive bacterium M.luteus with an IC(90) of 125ug/ml. Has weak antibacterial activity against the Gram-negative bacterium A.hydrophila. The protein is Scygonadin of Scylla serrata (Mud crab).